We begin with the raw amino-acid sequence, 366 residues long: Fructose-bisphosphate aldolase 1 (366 aa).

Substrate is bound by residues Arg56 and Lys147. Glu189 (proton acceptor) is an active-site residue. Catalysis depends on Lys231, which acts as the Schiff-base intermediate with dihydroxyacetone-P.

The protein belongs to the class I fructose-bisphosphate aldolase family. Ubiquitous.

It catalyses the reaction beta-D-fructose 1,6-bisphosphate = D-glyceraldehyde 3-phosphate + dihydroxyacetone phosphate. It functions in the pathway carbohydrate degradation; glycolysis; D-glyceraldehyde 3-phosphate and glycerone phosphate from D-glucose: step 4/4. May be involved in the metabolism of fructose-bisphosphate (beta-D-fructose 1,6-bisphosphate) and of fructose 1-phosphate. This chain is Fructose-bisphosphate aldolase 1 (aldo-1), found in Caenorhabditis elegans.